The sequence spans 322 residues: 1-aminocyclopropane-1-carboxylate oxidase 1 (322 aa).

Residues 159-259 form the Fe2OG dioxygenase domain; the sequence is PTFGTKVSSY…RMSIASFYNP (101 aa). Positions 183, 185, and 240 each coordinate Fe cation.

The protein belongs to the iron/ascorbate-dependent oxidoreductase family. Fe cation is required as a cofactor.

The enzyme catalyses 1-aminocyclopropane-1-carboxylate + L-ascorbate + O2 = ethene + L-dehydroascorbate + hydrogen cyanide + CO2 + 2 H2O. It participates in alkene biosynthesis; ethylene biosynthesis via S-adenosyl-L-methionine; ethylene from S-adenosyl-L-methionine: step 2/2. This is 1-aminocyclopropane-1-carboxylate oxidase 1 (ACO1) from Oryza sativa subsp. japonica (Rice).